The following is a 368-amino-acid chain: Peptide chain release factor 2 (368 aa).

Position 250 is an N5-methylglutamine (glutamine 250).

The protein belongs to the prokaryotic/mitochondrial release factor family. Methylated by PrmC. Methylation increases the termination efficiency of RF2.

The protein localises to the cytoplasm. In terms of biological role, peptide chain release factor 2 directs the termination of translation in response to the peptide chain termination codons UGA and UAA. The sequence is that of Peptide chain release factor 2 from Chlamydia abortus (strain DSM 27085 / S26/3) (Chlamydophila abortus).